The chain runs to 127 residues: Large ribosomal subunit protein bL12 (127 aa).

Belongs to the bacterial ribosomal protein bL12 family. As to quaternary structure, homodimer. Part of the ribosomal stalk of the 50S ribosomal subunit. Forms a multimeric L10(L12)X complex, where L10 forms an elongated spine to which 2 to 4 L12 dimers bind in a sequential fashion. Binds GTP-bound translation factors.

Its function is as follows. Forms part of the ribosomal stalk which helps the ribosome interact with GTP-bound translation factors. Is thus essential for accurate translation. The polypeptide is Large ribosomal subunit protein bL12 (Caulobacter vibrioides (strain ATCC 19089 / CIP 103742 / CB 15) (Caulobacter crescentus)).